The primary structure comprises 562 residues: NAD-dependent malic enzyme (562 aa).

The active-site Proton donor is the Tyr-101. Arg-154 provides a ligand contact to NAD(+). The active-site Proton acceptor is the Lys-172. A divalent metal cation contacts are provided by Glu-243, Asp-244, and Asp-267. Asp-267 and Asn-415 together coordinate NAD(+).

It belongs to the malic enzymes family. In terms of assembly, homotetramer. Mg(2+) is required as a cofactor. It depends on Mn(2+) as a cofactor.

The enzyme catalyses (S)-malate + NAD(+) = pyruvate + CO2 + NADH. It carries out the reaction oxaloacetate + H(+) = pyruvate + CO2. This Shewanella denitrificans (strain OS217 / ATCC BAA-1090 / DSM 15013) protein is NAD-dependent malic enzyme.